A 61-amino-acid polypeptide reads, in one-letter code: Temporin-ALi (61 aa).

Residues 1–22 form the signal peptide; that stretch reads MFPLKKSLLLLFFLATINLSLC. Residues 23-46 constitute a propeptide that is removed on maturation; it reads EQERNAEEERRDEPDERNAEVEKR. Leucine 59 is modified (leucine amide).

Belongs to the frog skin active peptide (FSAP) family. Temporin subfamily. In terms of tissue distribution, expressed by the skin glands.

The protein localises to the secreted. Functionally, antimicrobial peptide with activity against Gram-positive and Gram-negative bacteria and against fungi. Has been tested against S.aureus (MIC=7.5 ug/mL), B.pumilus (MIC=7.5 ug/mL), B.cereus (MIC=75.0 ug/mL), E.coli (MIC=7.5 ug/mL), B.dysenteriae (MIC=20.0 ug/mL), A.cacoaceticus (MIC=60.0 ug/mL), P.aeruginosa (MIC=5.0 ug/mL) and C.albicans (MIC=5.0 ug/mL). Also shows a weak hemolytic activity. The chain is Temporin-ALi from Amolops loloensis (Lolokou Sucker Frog).